A 115-amino-acid chain; its full sequence is NADH-ubiquinone oxidoreductase chain 3 (115 aa).

An N-formylmethionine modification is found at Met1. The next 3 helical transmembrane spans lie at 3–23, 55–75, and 84–104; these read LMLA…IAFW, FFLV…LLPL, and LNTM…SLAY.

In terms of assembly, core subunit of respiratory chain NADH dehydrogenase (Complex I) which is composed of 45 different subunits. Interacts with TMEM186. Interacts with TMEM242.

It localises to the mitochondrion inner membrane. It catalyses the reaction a ubiquinone + NADH + 5 H(+)(in) = a ubiquinol + NAD(+) + 4 H(+)(out). Functionally, core subunit of the mitochondrial membrane respiratory chain NADH dehydrogenase (Complex I) which catalyzes electron transfer from NADH through the respiratory chain, using ubiquinone as an electron acceptor. Essential for the catalytic activity of complex I. The polypeptide is NADH-ubiquinone oxidoreductase chain 3 (Bos taurus (Bovine)).